The following is a 99-amino-acid chain: MKIPVLPAVVLLSLLALHSAQGASLGSSEEETTIGNYAAGPEAFNAQFLNIDKLRSAFKPDEFLNWHALFESIKRKLPFLNWDALPKLKGLRSATPDAQ.

A signal peptide spans 1-22 (MKIPVLPAVVLLSLLALHSAQG).

As to expression, highly expressed in skin, but not detectable in any other tissue examined. Expression restricted to cornified/stratified epithelia and not detected in non-cornified/stratified epithelia.

It is found in the secreted. Its function is as follows. May act as a soluble regulator of keratinocyte differentiation. May play an important role in embryonic skin morphogenesis. This Canis lupus familiaris (Dog) protein is Keratinocyte differentiation-associated protein.